A 327-amino-acid polypeptide reads, in one-letter code: tRNA N6-adenosine threonylcarbamoyltransferase (327 aa).

Fe cation contacts are provided by His-109 and His-113. Residues 132 to 136 (MVSGG), Asp-165, Gly-178, Asp-182, and Asn-268 each bind substrate. Asp-296 lines the Fe cation pocket.

This sequence belongs to the KAE1 / TsaD family. In terms of assembly, forms a hexamer composed of two TsaB, TsaD and TsaE trimers. It depends on Fe(2+) as a cofactor.

The protein resides in the cytoplasm. It catalyses the reaction L-threonylcarbamoyladenylate + adenosine(37) in tRNA = N(6)-L-threonylcarbamoyladenosine(37) in tRNA + AMP + H(+). Functionally, required for the formation of a threonylcarbamoyl group on adenosine at position 37 (t(6)A37) in tRNAs that read codons beginning with adenine. Is involved in the transfer of the threonylcarbamoyl moiety of threonylcarbamoyl-AMP (TC-AMP) to the N6 group of A37, together with TsaE and TsaB. TsaD likely plays a direct catalytic role in this reaction. This Thermotoga maritima (strain ATCC 43589 / DSM 3109 / JCM 10099 / NBRC 100826 / MSB8) protein is tRNA N6-adenosine threonylcarbamoyltransferase.